Here is a 1676-residue protein sequence, read N- to C-terminus: Anucleate primary sterigmata protein A (1676 aa).

Over residues 1–11 the composition is skewed to polar residues; sequence MEDSQRGNASM. Residues 1-35 are disordered; the sequence is MEDSQRGNASMMSMMDDPFVVSPEGARDPPSTNQY. Positions 51-127 form a coiled coil; the sequence is AQAKRALEAH…EIGQETARAF (77 aa). 7 disordered regions span residues 160–180, 353–394, 439–712, 1027–1050, 1176–1201, 1220–1270, and 1297–1354; these read QATN…NQSN, RLRQ…TPRH, DEVE…SRRP, GTST…PVEP, PLGA…DQGA, VRPL…QASS, and PASA…RRSS. The span at 163 to 172 shows a compositional bias: low complexity; sequence NSPSKVSVPS. Coiled coils occupy residues 193–359 and 408–453; these read TSLL…QQEA and HAHR…AANG. 5 stretches are compositionally biased toward basic and acidic residues: residues 355–370, 439–448, 461–470, 479–489, and 503–522; these read RQQE…RPHD, DEVEQRRRDS, TKAETRKPAR, KKAEVEIHDSD, and ASND…RSDA. Over residues 593–602 the composition is skewed to low complexity; it reads SYYSTASTSA. The span at 609–620 shows a compositional bias: polar residues; it reads DPGTPSISQFST. Residues 623–636 are compositionally biased toward basic residues; sequence YRLRKKRSVLRKIR. The segment covering 647 to 664 has biased composition (polar residues); that stretch reads SRPSSARESPSTSFTRDT. Positions 678 to 687 are enriched in acidic residues; the sequence is AEVDGDEDDF. Residues 1032 to 1042 are compositionally biased toward low complexity; sequence TVEFSVSSISS. Residues 1191-1201 are compositionally biased toward polar residues; the sequence is SGSSNQADQGA. Positions 1314–1341 are enriched in polar residues; that stretch reads RASSQQRPRTPNESALQVGSAKTTTSRA. The 112-residue stretch at 1393 to 1504 folds into the PH domain; that stretch reads QTMIGEFLWK…WFNALSYLLV (112 aa). The span at 1511–1524 shows a compositional bias: acidic residues; sequence EEAENGVTLDDIDE. Disordered regions lie at residues 1511-1589 and 1654-1676; these read EEAE…QASS and HDVS…HSHH. Composition is skewed to polar residues over residues 1534-1548 and 1580-1589; these read RQTA…QSRG and YSDQARQASS.

It is found in the membrane. In terms of biological role, required for nuclear positioning and completion of asexual development. The chain is Anucleate primary sterigmata protein A (apsA) from Emericella nidulans (strain FGSC A4 / ATCC 38163 / CBS 112.46 / NRRL 194 / M139) (Aspergillus nidulans).